The following is an 817-amino-acid chain: tRNA(Met) cytidine acetyltransferase TmcA (817 aa).

ATP contacts are provided by residues glutamine 265, 289-298 (GRGKSVSVGI), and arginine 439. The region spanning 469–664 (ELIRKMEVYL…YTAIVIKPIS (196 aa)) is the N-acetyltransferase domain. Residues 589-591 (IAT), 596-602 (MDLGLGS), glutamate 629, and arginine 636 contribute to the acetyl-CoA site.

It belongs to the RNA cytidine acetyltransferase family. TmcA subfamily.

It localises to the cytoplasm. It catalyses the reaction cytidine(34) in elongator tRNA(Met) + acetyl-CoA + ATP + H2O = N(4)-acetylcytidine(34) in elongator tRNA(Met) + ADP + phosphate + CoA + H(+). The catalysed reaction is a cytidine in RNA + acetyl-CoA + ATP + H2O = an N(4)-acetylcytidine in RNA + ADP + phosphate + CoA + H(+). It carries out the reaction a cytidine in tRNA + acetyl-CoA + ATP + H2O = an N(4)-acetylcytidine in tRNA + ADP + phosphate + CoA + H(+). The enzyme catalyses a cytidine in mRNA + acetyl-CoA + ATP + H2O = an N(4)-acetylcytidine in mRNA + ADP + phosphate + CoA + H(+). In terms of biological role, catalyzes the formation of N(4)-acetylcytidine (ac(4)C) at the wobble position of tRNA(Met), by using acetyl-CoA as an acetyl donor and ATP (or GTP). Its function is as follows. Catalyzes the formation of N(4)-acetylcytidine (ac(4)C) sites in rRNA, tRNA, mRNA and non-coding (nc) RNA, almost always on the middle C of a CCG motif. In hyperthermophiles more acetylation is seen at higher temperatures. This is tRNA(Met) cytidine acetyltransferase TmcA from Pyrococcus abyssi (strain GE5 / Orsay).